The chain runs to 980 residues: Ankycorbin (980 aa).

Met-1 carries the post-translational modification N-acetylmethionine. Residue Ser-11 is modified to Phosphoserine. ANK repeat units follow at residues 18 to 51 (KNDDRLLQAVENGDAEKVASLLGKKGASATKHDS), 52 to 81 (EGKTAFHLAAAKGHVECLRVMITHGVDVTA), 85 to 114 (TGHSALHLAAKNSHHECIRKLLQSKCPAES), 118 to 147 (SGKTALHYAAAQGCLQAVQILCEHKSPINL), 151 to 180 (DGNIPLLLAVQNGHSEICHFLLDHGADVNS), 184 to 213 (SGRTALMLACEIGSSNAVEALIKKGADLNL), and 217 to 247 (LGYNALHYSKLSENAGIQSLLLSKISQDADL). The span at 247–259 (LKTPTKPKQHDQV) shows a compositional bias: basic and acidic residues. Positions 247 to 301 (LKTPTKPKQHDQVSKISSERSGTPKKRKAPPPPISPTQLSDVSSPRSITSTPLSG) are disordered. The residue at position 249 (Thr-249) is a Phosphothreonine. Positions 270–276 (PKKRKAP) match the Nuclear localization signal motif. 3 positions are modified to phosphoserine: Ser-281, Ser-286, and Ser-293. The span at 282 to 299 (PTQLSDVSSPRSITSTPL) shows a compositional bias: polar residues. 2 positions are modified to phosphothreonine: Thr-295 and Thr-297. Residues Ser-300, Ser-304, Ser-318, Ser-327, Ser-329, Ser-340, Ser-341, Ser-350, Ser-358, Ser-419, Ser-512, Ser-515, Ser-667, and Ser-915 each carry the phosphoserine modification. A coiled-coil region spans residues 349-374 (LSLLQAKVASLTLHNKELQDKLQAKS). Residues 387-423 (YHSTQTDLGPSLGKPGETSPPDSKSSPSVLIHSLGKS) form a disordered region. The stretch at 425 to 947 (TDNDVRIQQL…QHQEVISVYR (523 aa)) forms a coiled coil.

As to quaternary structure, interacts with PALLD. Associates with actin. However, does not bind F-actin directly. Highly expressed in placenta, muscle, kidney and testis. Moderately expressed in heart, brain, lung, liver and intestine. Isoform 2 is widely expressed and expressed in fetal and adult testes, and spermatozoa.

The protein localises to the cytoplasm. It localises to the cytoskeleton. It is found in the stress fiber. The protein resides in the cell cortex. Its subcellular location is the cell junction. The protein localises to the nucleus. Functionally, plays a role in actin regulation at the ectoplasmic specialization, a type of cell junction specific to testis. Important for establishment of sperm polarity and normal spermatid adhesion. May also promote integrity of Sertoli cell tight junctions at the blood-testis barrier. The protein is Ankycorbin (RAI14) of Homo sapiens (Human).